Consider the following 242-residue polypeptide: Stress response regulator protein 1 (242 aa).

Residues 118–236 form the Response regulatory domain; the sequence is NFLLVDDNFI…FDHIITCIEK (119 aa). A 4-aspartylphosphate modification is found at D169.

Functionally, required for stress adaptation, morphogenesis and virulence. In Debaryomyces hansenii (strain ATCC 36239 / CBS 767 / BCRC 21394 / JCM 1990 / NBRC 0083 / IGC 2968) (Yeast), this protein is Stress response regulator protein 1 (SRR1).